A 339-amino-acid chain; its full sequence is tRNA-splicing endonuclease (339 aa).

Active-site residues include Tyr274, His285, and Lys316.

Belongs to the tRNA-intron endonuclease family. Archaeal long subfamily. As to quaternary structure, homodimer. It depends on Ca(2+) as a cofactor. Requires Mg(2+) as cofactor. In terms of processing, the N-terminus is blocked.

The catalysed reaction is pretRNA = a 3'-half-tRNA molecule with a 5'-OH end + a 5'-half-tRNA molecule with a 2',3'-cyclic phosphate end + an intron with a 2',3'-cyclic phosphate and a 5'-hydroxyl terminus.. Its function is as follows. Endonuclease that removes tRNA introns. Cleaves pre-tRNA at the 5'- and 3'-splice sites to release the intron. The products are an intron and two tRNA half-molecules bearing 2',3' cyclic phosphate and 5'-OH termini. Recognizes a pseudosymmetric substrate in which 2 bulged loops of 3 bases are separated by a stem of 4 bp. The sequence is that of tRNA-splicing endonuclease from Haloferax volcanii (strain ATCC 29605 / DSM 3757 / JCM 8879 / NBRC 14742 / NCIMB 2012 / VKM B-1768 / DS2) (Halobacterium volcanii).